Reading from the N-terminus, the 186-residue chain is Peptide deformylase (186 aa).

Residues cysteine 113 and histidine 156 each coordinate Fe cation. Glutamate 157 is an active-site residue. Residue histidine 160 participates in Fe cation binding.

It belongs to the polypeptide deformylase family. The cofactor is Fe(2+).

It carries out the reaction N-terminal N-formyl-L-methionyl-[peptide] + H2O = N-terminal L-methionyl-[peptide] + formate. Its function is as follows. Removes the formyl group from the N-terminal Met of newly synthesized proteins. Requires at least a dipeptide for an efficient rate of reaction. N-terminal L-methionine is a prerequisite for activity but the enzyme has broad specificity at other positions. This Ligilactobacillus salivarius (strain UCC118) (Lactobacillus salivarius) protein is Peptide deformylase.